Here is a 513-residue protein sequence, read N- to C-terminus: Na(+)/H(+) antiporter NhaB (513 aa).

A run of 11 helical transmembrane segments spans residues 23-43 (LALIIFLILNPLIFIISPFVA), 52-72 (IFTLAMALKCYPLLPGGLLAI), 97-117 (LLLMFMVAGIYFMKQLLLFIF), 144-164 (FLDALTVVAVVISVAVGFYGI), 202-222 (LMMHAGVGTALGGVMTMVGEP), 238-258 (FFLRMSPVTVPVLICGLLTCL), 303-323 (AIIGVWLVTALALHLAEVGLI), 348-368 (TESLPFTALLTVFFSVVAVII), 391-411 (LFYIFNGLLSSISDNVFVGTI), 447-467 (ATPNGQAAFLFLLTSALAPLI), and 475-495 (VWMALPYTLVLTLVGLLCVEF).

The protein belongs to the NhaB Na(+)/H(+) (TC 2.A.34) antiporter family.

It is found in the cell inner membrane. The enzyme catalyses 2 Na(+)(in) + 3 H(+)(out) = 2 Na(+)(out) + 3 H(+)(in). Functionally, na(+)/H(+) antiporter that extrudes sodium in exchange for external protons. The sequence is that of Na(+)/H(+) antiporter NhaB from Escherichia coli (strain SMS-3-5 / SECEC).